The following is a 302-amino-acid chain: Protein FdhE homolog (302 aa).

This sequence belongs to the FdhE family.

Its subcellular location is the cytoplasm. Its function is as follows. Necessary for formate dehydrogenase activity. This Haemophilus influenzae (strain PittEE) protein is Protein FdhE homolog.